The chain runs to 65 residues: Toxin Cbi1 (65 aa).

An LCN-type CS-alpha/beta domain is found at 1 to 64 (KDGYPMDNKG…VWDRATNKCR (64 aa)). Cystine bridges form between Cys-11–Cys-63, Cys-15–Cys-37, Cys-22–Cys-44, and Cys-26–Cys-46.

It belongs to the long (4 C-C) scorpion toxin superfamily. Sodium channel inhibitor family. Beta subfamily. Expressed by the venom gland.

Its subcellular location is the secreted. Functionally, beta toxins bind voltage-independently at site-4 of sodium channels (Nav) and shift the voltage of activation toward more negative potentials thereby affecting sodium channel activation and promoting spontaneous and repetitive firing. In Centruroides bicolor (Scorpion), this protein is Toxin Cbi1.